The primary structure comprises 333 residues: Phosphate acyltransferase (333 aa).

It belongs to the PlsX family. As to quaternary structure, homodimer. Probably interacts with PlsY.

The protein localises to the cytoplasm. It carries out the reaction a fatty acyl-[ACP] + phosphate = an acyl phosphate + holo-[ACP]. It participates in lipid metabolism; phospholipid metabolism. In terms of biological role, catalyzes the reversible formation of acyl-phosphate (acyl-PO(4)) from acyl-[acyl-carrier-protein] (acyl-ACP). This enzyme utilizes acyl-ACP as fatty acyl donor, but not acyl-CoA. This Thermoanaerobacterium thermosaccharolyticum (strain ATCC 7956 / DSM 571 / NCIMB 9385 / NCA 3814 / NCTC 13789 / WDCM 00135 / 2032) (Clostridium thermosaccharolyticum) protein is Phosphate acyltransferase.